The sequence spans 250 residues: Small ribosomal subunit protein uS5 (250 aa).

Polar residues predominate over residues 1–22 (MNVVETSSEMNSNVEKASTPKQ). Positions 1-40 (MNVVETSSEMNSNVEKASTPKQENNKRFERKSRPSSRQKV) are disordered. The S5 DRBM domain maps to 45-108 (FEEKVVTIRR…KEAKKNLVSV (64 aa)).

This sequence belongs to the universal ribosomal protein uS5 family. As to quaternary structure, part of the 30S ribosomal subunit. Contacts proteins S4 and S8.

Its function is as follows. With S4 and S12 plays an important role in translational accuracy. Functionally, located at the back of the 30S subunit body where it stabilizes the conformation of the head with respect to the body. This is Small ribosomal subunit protein uS5 from Mycoplasma capricolum subsp. capricolum (strain California kid / ATCC 27343 / NCTC 10154).